The following is a 368-amino-acid chain: F-box only protein 28 (368 aa).

Residues 1–11 (MAAASEERMAE) are compositionally biased toward basic and acidic residues. Positions 1–57 (MAAASEERMAEEGGGGHGDGGSPSAIASTQRLPPPPPPQPPQPGSQAPPAPALAPDQ) are disordered. Gly residues predominate over residues 12–21 (EGGGGHGDGG). Over residues 32 to 52 (LPPPPPPQPPQPGSQAPPAPA) the composition is skewed to pro residues. Residues 61–109 (NNTLVALPIVAIENILSFMSYDEISQLRLVCKRMDLVCQRMLNQGFLKV) enclose the F-box domain. Residues serine 235 and serine 242 each carry the phosphoserine modification. A Phosphothreonine modification is found at threonine 270. The interval 328–368 (MESAVGNSSGSGQSEESPRKRKKAAEAIDSLRKSKRLRNRK) is disordered. Phosphoserine is present on serine 344.

Part of a SCF (SKP1-cullin-F-box) protein ligase complex.

The protein resides in the chromosome. Its subcellular location is the centromere. The protein localises to the kinetochore. Its function is as follows. Probably recognizes and binds to some phosphorylated proteins and promotes their ubiquitination and degradation. The polypeptide is F-box only protein 28 (FBXO28) (Bos taurus (Bovine)).